A 359-amino-acid chain; its full sequence is tRNA-specific 2-thiouridylase MnmA (359 aa).

Residues 6–13 and L32 each bind ATP; that span reads AMSGGVDS. Catalysis depends on C97, which acts as the Nucleophile. C97 and C195 are joined by a disulfide. G121 is a binding site for ATP. The segment at 144–146 is interaction with tRNA; it reads KDQ. C195 functions as the Cysteine persulfide intermediate in the catalytic mechanism.

This sequence belongs to the MnmA/TRMU family.

Its subcellular location is the cytoplasm. The catalysed reaction is S-sulfanyl-L-cysteinyl-[protein] + uridine(34) in tRNA + AH2 + ATP = 2-thiouridine(34) in tRNA + L-cysteinyl-[protein] + A + AMP + diphosphate + H(+). Catalyzes the 2-thiolation of uridine at the wobble position (U34) of tRNA, leading to the formation of s(2)U34. The chain is tRNA-specific 2-thiouridylase MnmA from Tropheryma whipplei (strain TW08/27) (Whipple's bacillus).